A 98-amino-acid polypeptide reads, in one-letter code: Large ribosomal subunit protein uL23 (98 aa).

Belongs to the universal ribosomal protein uL23 family. In terms of assembly, part of the 50S ribosomal subunit. Contacts protein L29, and trigger factor when it is bound to the ribosome.

Its function is as follows. One of the early assembly proteins it binds 23S rRNA. One of the proteins that surrounds the polypeptide exit tunnel on the outside of the ribosome. Forms the main docking site for trigger factor binding to the ribosome. In Alcanivorax borkumensis (strain ATCC 700651 / DSM 11573 / NCIMB 13689 / SK2), this protein is Large ribosomal subunit protein uL23.